A 222-amino-acid polypeptide reads, in one-letter code: Glutathione-specific gamma-glutamylcyclotransferase 1 (222 aa).

Residues 1 to 22 (MKQESAAPNTPPTSQSPTPSAQ) are compositionally biased toward low complexity. A disordered region spans residues 1-24 (MKQESAAPNTPPTSQSPTPSAQFP). Position 35–40 (35–40 (IFGYGS)) interacts with substrate. Residue E115 is the Proton acceptor of the active site.

Belongs to the gamma-glutamylcyclotransferase family. ChaC subfamily. Interacts with NOTCH1 (via extracellular region).

Its subcellular location is the cytoplasm. The protein localises to the cytosol. It is found in the golgi apparatus. The protein resides in the trans-Golgi network. It carries out the reaction glutathione = L-cysteinylglycine + 5-oxo-L-proline. Functionally, catalyzes the cleavage of glutathione into 5-oxo-L-proline and a Cys-Gly dipeptide. Acts specifically on glutathione, but not on other gamma-glutamyl peptides. Glutathione depletion is an important factor for apoptosis initiation and execution. Acts as a pro-apoptotic component of the unfolded protein response pathway by mediating the pro-apoptotic effects of the ATF4-ATF3-DDIT3/CHOP cascade. Negative regulator of Notch signaling pathway involved in embryonic neurogenesis: acts by inhibiting Notch cleavage by furin, maintaining Notch in an immature inactive form, thereby promoting neurogenesis in embryos. The polypeptide is Glutathione-specific gamma-glutamylcyclotransferase 1 (Homo sapiens (Human)).